We begin with the raw amino-acid sequence, 407 residues long: Putative glycosyltransferase YtcC (407 aa).

It belongs to the glycosyltransferase group 1 family. Glycosyltransferase 4 subfamily.

This is Putative glycosyltransferase YtcC (ytcC) from Bacillus subtilis (strain 168).